A 633-amino-acid polypeptide reads, in one-letter code: Ankyrin repeat and SOCS box protein 2 (633 aa).

A UIM domain is found at 26–45; sequence SEDELVQMAIEQSLADKTRG. ANK repeat units lie at residues 102–131, 135–165, 169–198, 202–231, 235–264, 268–297, 301–330, 334–363, 366–395, 408–437, 438–467, and 474–502; these read APVD…NLSE, EGWL…VIDQ, QEET…EPDI, SRET…DTNH, RGWT…KVEA, YGIT…DINT, DSAS…DANK, DGML…RTRV, SGIS…DVNA, RRSS…DPNR, DVIN…NIDA, and TAFP…NGEP. The residue at position 369 (Ser369) is a Phosphoserine. The SOCS box domain maps to 579 to 633; the sequence is EDWAVIKEKAEPPRPLAHLCRLRVRKAIGKYRIKLLDTLPLPGRLIRYLKYENTQ.

The protein belongs to the ankyrin SOCS box (ASB) family. As to quaternary structure, component of a probable ECS E3 ubiquitin-protein ligase complex which contains CUL5, either RBX1 or RNF7/RBX2, Elongin BC complex (ELOB and ELOC) and ASB2. Interacts with SKP2. Through its interaction with SKP2, likely to bridge the formation of dimeric E3-ubiquitin-protein ligase complexes composed of an ECS complex and an SCF(SKP2) complex. Interacts with JAK2; the interaction targets JAK2 for Notch-mediated proteasomal degradation. Interacts with TCF3/E2A; the interaction is mediated by SKP2 and targets TCF3 for Notch-mediated proteasomal degradation. Interacts with DES. In terms of processing, monoubiquitinated.

It is found in the cytoplasm. It localises to the cytoskeleton. Its subcellular location is the stress fiber. The protein localises to the myofibril. The protein resides in the sarcomere. It is found in the z line. Its pathway is protein modification; protein ubiquitination. Its function is as follows. Substrate-recognition component of a SCF-like ECS (Elongin-Cullin-SOCS-box protein) E3 ubiquitin-protein ligase complex which mediates the ubiquitination and subsequent proteasomal degradation of target proteins. Mediates Notch-induced ubiquitination and degradation of substrates including E2A and JAK2. Required during embryonic heart development for complete heart looping. Required for cardiomyocyte differentiation. Involved in myogenic differentiation and targets filamin FLNB for proteasomal degradation but not filamin FLNA. Also targets DES for proteasomal degradation. Acts as a negative regulator of skeletal muscle mass. The sequence is that of Ankyrin repeat and SOCS box protein 2 from Bos taurus (Bovine).